The sequence spans 535 residues: MSVRYTLNLRVFWPLVTGLCTALVCLYHALRSSEDARAESPDGADSGFPLLKVAILLLLGYILLRCRHAIRQRLLPGSSRPRGHANFSARSLQEPGLSILLESYYEHEVRLSPHVLGHSKAHVSRIVGELVQAGRARGSPGLITGGALALAFRGDFIQVGSAYEQHKIRRPDSFDVLVPLRLPPQVALEPRSLGTEPSLTPAFRSCFVCALKAPPSPSGASTGQWHRDCKPFAEGFCVDVQGRRHLSATLVLRWFQAHLQRSLATVRYSLEGRCRVSLTPGSLEQPPTLHILPCRTDYGCCRLSMAVRLIPAVHLGDGVFLVAPPPPPSPSGALSELPGGLRAEALWGVNTARQEQKLLGWLQERAPPGACYLKCLQLLKALRDLGARGLDPMAATHWGRILSSYVLKTAVLEVLLNEGSPTPSWDEAHLSECLEKLVKFLRDCLLRRRDLFHCVLGPTGAAAEVGPLPKVLREAAPVDLLAPFDPHSRELAAARLLSTWRRLPQLLRVYGGPRYLARCPAPRSQRIQGSPEDEP.

Residues methionine 1–serine 32 form the signal peptide. The Extracellular portion of the chain corresponds to serine 33 to glycine 43. A helical membrane pass occupies residues alanine 44–leucine 64. Residues arginine 65–proline 535 are Cytoplasmic-facing. Serine 139 carries the phosphoserine modification.

Belongs to the ITPRIP family.

The protein localises to the membrane. The chain is Inositol 1,4,5-trisphosphate receptor-interacting protein-like 2 (Itpripl2) from Mus musculus (Mouse).